We begin with the raw amino-acid sequence, 424 residues long: GTPase Obg (424 aa).

Residues 1–158 (MFIDTAKILV…RMINLEIKLL (158 aa)) enclose the Obg domain. One can recognise an OBG-type G domain in the interval 159 to 331 (ADVGLIGFPN…LIKEVTRQLS (173 aa)). Residues 165 to 172 (GFPNVGKS), 190 to 194 (FTTLK), 212 to 215 (DIPG), 282 to 285 (NKID), and 312 to 314 (SAA) contribute to the GTP site. Mg(2+) is bound by residues serine 172 and threonine 192. In terms of domain architecture, OCT spans 345–424 (RFMPEEKRFT…LNDFEFDFLL (80 aa)).

This sequence belongs to the TRAFAC class OBG-HflX-like GTPase superfamily. OBG GTPase family. In terms of assembly, monomer. Mg(2+) is required as a cofactor.

The protein resides in the cytoplasm. In terms of biological role, an essential GTPase which binds GTP, GDP and possibly (p)ppGpp with moderate affinity, with high nucleotide exchange rates and a fairly low GTP hydrolysis rate. Plays a role in control of the cell cycle, stress response, ribosome biogenesis and in those bacteria that undergo differentiation, in morphogenesis control. This is GTPase Obg from Clostridium novyi (strain NT).